The following is a 343-amino-acid chain: Anthranilate phosphoribosyltransferase (343 aa).

Residues glycine 77, 80–81, threonine 85, 87–90, 105–113, and serine 117 each bind 5-phospho-alpha-D-ribose 1-diphosphate; these read GD, NVST, and KHGNRSSSG. Glycine 77 is a binding site for anthranilate. Serine 89 contributes to the Mg(2+) binding site. Asparagine 108 contributes to the anthranilate binding site. Residue arginine 163 participates in anthranilate binding. Positions 222 and 223 each coordinate Mg(2+).

This sequence belongs to the anthranilate phosphoribosyltransferase family. In terms of assembly, homodimer. The cofactor is Mg(2+).

The enzyme catalyses N-(5-phospho-beta-D-ribosyl)anthranilate + diphosphate = 5-phospho-alpha-D-ribose 1-diphosphate + anthranilate. Its pathway is amino-acid biosynthesis; L-tryptophan biosynthesis; L-tryptophan from chorismate: step 2/5. Catalyzes the transfer of the phosphoribosyl group of 5-phosphorylribose-1-pyrophosphate (PRPP) to anthranilate to yield N-(5'-phosphoribosyl)-anthranilate (PRA). The sequence is that of Anthranilate phosphoribosyltransferase from Cenarchaeum symbiosum (strain A).